A 196-amino-acid chain; its full sequence is Dephospho-CoA kinase (196 aa).

The region spanning 3–196 (RIGLTGNIGC…KVYEELTRDP (194 aa)) is the DPCK domain. Residue 11-16 (GCGKST) coordinates ATP.

This sequence belongs to the CoaE family.

It is found in the cytoplasm. It catalyses the reaction 3'-dephospho-CoA + ATP = ADP + CoA + H(+). It participates in cofactor biosynthesis; coenzyme A biosynthesis; CoA from (R)-pantothenate: step 5/5. Functionally, catalyzes the phosphorylation of the 3'-hydroxyl group of dephosphocoenzyme A to form coenzyme A. In Aquifex aeolicus (strain VF5), this protein is Dephospho-CoA kinase.